The chain runs to 393 residues: Methylthioribose kinase (393 aa).

ATP is bound by residues N38, K53, and 107–109 (EDL). D225 is a substrate binding site. 242–244 (DPE) is a binding site for ATP. R332 serves as a coordination point for substrate.

It belongs to the methylthioribose kinase family. In terms of assembly, homodimer.

It catalyses the reaction 5-(methylsulfanyl)-D-ribose + ATP = 5-(methylsulfanyl)-alpha-D-ribose 1-phosphate + ADP + H(+). It participates in amino-acid biosynthesis; L-methionine biosynthesis via salvage pathway; S-methyl-5-thio-alpha-D-ribose 1-phosphate from S-methyl-5'-thioadenosine (hydrolase route): step 2/2. Catalyzes the phosphorylation of methylthioribose into methylthioribose-1-phosphate. In Bacillus cereus (strain G9842), this protein is Methylthioribose kinase.